A 203-amino-acid polypeptide reads, in one-letter code: uncharacterized protein (203 aa).

This is an uncharacterized protein from Chlorobium limicola.